The sequence spans 535 residues: Methylmalonate-semialdehyde/malonate-semialdehyde dehydrogenase [acylating], mitochondrial (535 aa).

The transit peptide at 1 to 32 directs the protein to the mitochondrion; the sequence is MAAAVAAAAAVRSRILQVSSKVNSTWYPASSF. 4 positions are modified to N6-acetyllysine; alternate: Lys47, Lys52, Lys55, and Lys76. N6-succinyllysine; alternate is present on residues Lys47, Lys52, Lys55, and Lys76. An N6-acetyllysine modification is found at Lys87. N6-acetyllysine; alternate occurs at positions 117 and 129. An N6-succinyllysine; alternate mark is found at Lys117 and Lys129. The NAD(+) site is built by Ala183, Phe185, Lys209, Glu212, Arg213, and Ser262. A Phosphoserine modification is found at Ser262. Lys298 bears the N6-acetyllysine mark. Cys317 acts as the Nucleophile in catalysis. N6-acetyllysine occurs at positions 330 and 331. N6-acetyllysine; alternate occurs at positions 364 and 376. Lys364 and Lys376 each carry N6-succinyllysine; alternate. Phosphoserine is present on Ser380. Lys391 is subject to N6-succinyllysine. Glu417 lines the NAD(+) pocket. Lys500 carries the post-translational modification N6-acetyllysine. N6-succinyllysine is present on Lys517.

It belongs to the aldehyde dehydrogenase family. Homotetramer. In terms of tissue distribution, expressed in the head and flagellum of epididymal sperm but not in testicular sperm (at protein level). Kidney &gt; liver &gt; heart &gt; muscle &gt; brain.

It is found in the mitochondrion. It carries out the reaction 3-oxopropanoate + NAD(+) + CoA + H2O = hydrogencarbonate + acetyl-CoA + NADH + H(+). The catalysed reaction is 2-methyl-3-oxopropanoate + NAD(+) + CoA + H2O = propanoyl-CoA + hydrogencarbonate + NADH + H(+). It catalyses the reaction (R)-2-methyl-3-oxopropanoate + NAD(+) + CoA + H2O = propanoyl-CoA + hydrogencarbonate + NADH + H(+). The enzyme catalyses (S)-2-methyl-3-oxopropanoate + NAD(+) + CoA + H2O = propanoyl-CoA + hydrogencarbonate + NADH + H(+). Malonate and methylmalonate semialdehyde dehydrogenase involved in the catabolism of valine, thymine, and compounds catabolized by way of beta-alanine, including uracil and cytidine. This Rattus norvegicus (Rat) protein is Methylmalonate-semialdehyde/malonate-semialdehyde dehydrogenase [acylating], mitochondrial.